The sequence spans 641 residues: SH2 domain-containing protein A (641 aa).

Positions 355 to 384 (VNGNGTSMEWRPQNHEEDNSSTDSENTEMR) are disordered. Positions 547–641 (WIEGFVTKEE…SRLGRIIRGI (95 aa)) constitute an SH2 domain.

In terms of processing, phosphorylated on tyrosine residues. Expressed in roots, leaves, stems and flowers.

This Arabidopsis thaliana (Mouse-ear cress) protein is SH2 domain-containing protein A.